We begin with the raw amino-acid sequence, 712 residues long: Ribosomal RNA large subunit methyltransferase K/L (712 aa).

One can recognise a THUMP domain in the interval Gln42–Leu153.

The protein belongs to the methyltransferase superfamily. RlmKL family.

The protein resides in the cytoplasm. It catalyses the reaction guanosine(2445) in 23S rRNA + S-adenosyl-L-methionine = N(2)-methylguanosine(2445) in 23S rRNA + S-adenosyl-L-homocysteine + H(+). The catalysed reaction is guanosine(2069) in 23S rRNA + S-adenosyl-L-methionine = N(2)-methylguanosine(2069) in 23S rRNA + S-adenosyl-L-homocysteine + H(+). In terms of biological role, specifically methylates the guanine in position 2445 (m2G2445) and the guanine in position 2069 (m7G2069) of 23S rRNA. The chain is Ribosomal RNA large subunit methyltransferase K/L from Stenotrophomonas maltophilia (strain R551-3).